A 119-amino-acid polypeptide reads, in one-letter code: Large ribosomal subunit protein uL18 (119 aa).

Belongs to the universal ribosomal protein uL18 family. In terms of assembly, part of the 50S ribosomal subunit; part of the 5S rRNA/L5/L18/L25 subcomplex. Contacts the 5S and 23S rRNAs.

Its function is as follows. This is one of the proteins that bind and probably mediate the attachment of the 5S RNA into the large ribosomal subunit, where it forms part of the central protuberance. The polypeptide is Large ribosomal subunit protein uL18 (Cereibacter sphaeroides (strain ATCC 17025 / ATH 2.4.3) (Rhodobacter sphaeroides)).